Here is a 333-residue protein sequence, read N- to C-terminus: Nucleoid-associated protein YE1421 (333 aa).

It belongs to the YejK family.

The protein resides in the cytoplasm. It is found in the nucleoid. In Yersinia enterocolitica serotype O:8 / biotype 1B (strain NCTC 13174 / 8081), this protein is Nucleoid-associated protein YE1421.